The primary structure comprises 171 residues: uncharacterized protein (171 aa).

Disordered stretches follow at residues 1 to 41 (MDAV…SKPK) and 114 to 147 (DSLG…RPKR). The segment covering 27–38 (AQQQQGPSAQGS) has biased composition (low complexity). Positions 116-125 (LGNTASSSSM) are enriched in polar residues.

This is an uncharacterized protein from Mus musculus (Mouse).